The sequence spans 727 residues: Rho-related BTB domain-containing protein 2 (727 aa).

Positions 1-210 are rho-like; the sequence is MDSDMDYERP…DNAIRAALIS (210 aa). GTP is bound by residues 21–28, 84–88, and 140–143; these read GDNAVGKT, DTFGD, and CQLD. 2 consecutive BTB domains span residues 266–442 and 500–567; these read ADVI…DENE and SDVT…TSSP. The segment at 304 to 333 is disordered; the sequence is ELGGPSEPGGTHPEDHQGHSDQHHHHHHHH. The span at 315-324 shows a compositional bias: basic and acidic residues; that stretch reads HPEDHQGHSD. The segment at 703 to 727 is disordered; sequence FWNSPSSPSSSAASSSSPSSSSAVV. The segment covering 706–727 has biased composition (low complexity); sequence SPSSPSSSAASSSSPSSSSAVV.

This sequence belongs to the small GTPase superfamily. Rho family. Interacts with HSP90AA1 and HSP90AB1. Forms a complex with CUL3 and RBX1. Interacts (via BTB 1 domain) with CUL3. Interacts with MSI2. Post-translationally, autoubiquitinated by RHOBTB2-CUL3-RBX1 ubiquitin ligase complex. In terms of tissue distribution, ubiquitous, with highest levels in neural tissues. Expression is also detected in fetal lung, heart, and brain.

Its function is as follows. Regulator of cell proliferation and apoptosis. It likely functions as a substrate-adapter that recruits key substrates, e.g. MSI2, to CUL3-based ubiquitin ligase complexes for degradation. Required for MSI2 ubiquitination and degradation. This Homo sapiens (Human) protein is Rho-related BTB domain-containing protein 2 (RHOBTB2).